A 598-amino-acid polypeptide reads, in one-letter code: Elongation factor 4 (598 aa).

In terms of domain architecture, tr-type G spans 2–184 (KNIRNFSIIA…EIVHKIPAPE (183 aa)). Residues 14–19 (DHGKST) and 131–134 (NKID) contribute to the GTP site.

Belongs to the TRAFAC class translation factor GTPase superfamily. Classic translation factor GTPase family. LepA subfamily.

Its subcellular location is the cell inner membrane. The catalysed reaction is GTP + H2O = GDP + phosphate + H(+). Functionally, required for accurate and efficient protein synthesis under certain stress conditions. May act as a fidelity factor of the translation reaction, by catalyzing a one-codon backward translocation of tRNAs on improperly translocated ribosomes. Back-translocation proceeds from a post-translocation (POST) complex to a pre-translocation (PRE) complex, thus giving elongation factor G a second chance to translocate the tRNAs correctly. Binds to ribosomes in a GTP-dependent manner. The protein is Elongation factor 4 of Pasteurella multocida (strain Pm70).